The following is a 336-amino-acid chain: Cell division protein ZipA (336 aa).

Topologically, residues 1 to 6 are periplasmic; it reads MEDLQL. A helical transmembrane segment spans residues 7–27; that stretch reads VLFVLGAIAIIAVLVHGFWSI. At 28–336 the chain is on the cytoplasmic side; the sequence is RKQQPKPIKE…DYLRRIKAIV (309 aa). Disordered regions lie at residues 31-118 and 174-200; these read QPKP…PVRA and YGATTQASPQPASPVQSQAPREPEPLG. A compositionally biased stretch (polar residues) spans 73–91; it reads LPSSRNHTSVPVMTLQKAS. A compositionally biased stretch (basic and acidic residues) spans 108–118; sequence TTAERAEPVRA. Positions 179 to 193 are enriched in low complexity; sequence QASPQPASPVQSQAP.

The protein belongs to the ZipA family. Interacts with FtsZ via their C-terminal domains.

It is found in the cell inner membrane. Essential cell division protein that stabilizes the FtsZ protofilaments by cross-linking them and that serves as a cytoplasmic membrane anchor for the Z ring. Also required for the recruitment to the septal ring of downstream cell division proteins. This is Cell division protein ZipA from Shewanella denitrificans (strain OS217 / ATCC BAA-1090 / DSM 15013).